Reading from the N-terminus, the 118-residue chain is NADH-quinone oxidoreductase subunit A (118 aa).

3 helical membrane-spanning segments follow: residues 5–25, 61–81, and 90–110; these read YLGISLFLAAGLIIPFLAFAV, FLYALVFVAFDVETVFLYPWA, and FAIVEMFIFITILVVGFWYAW.

This sequence belongs to the complex I subunit 3 family. NDH-1 is composed of 14 different subunits. Subunits NuoA, H, J, K, L, M, N constitute the membrane sector of the complex.

The protein resides in the cell membrane. The catalysed reaction is a quinone + NADH + 5 H(+)(in) = a quinol + NAD(+) + 4 H(+)(out). Functionally, NDH-1 shuttles electrons from NADH, via FMN and iron-sulfur (Fe-S) centers, to quinones in the respiratory chain. The immediate electron acceptor for the enzyme in this species is believed to be a menaquinone. Couples the redox reaction to proton translocation (for every two electrons transferred, four hydrogen ions are translocated across the cytoplasmic membrane), and thus conserves the redox energy in a proton gradient. The sequence is that of NADH-quinone oxidoreductase subunit A from Heliobacterium modesticaldum (strain ATCC 51547 / Ice1).